Reading from the N-terminus, the 314-residue chain is tRNA pseudouridine synthase B (314 aa).

Catalysis depends on aspartate 47, which acts as the Nucleophile.

The protein belongs to the pseudouridine synthase TruB family. Type 1 subfamily.

The catalysed reaction is uridine(55) in tRNA = pseudouridine(55) in tRNA. Its function is as follows. Responsible for synthesis of pseudouridine from uracil-55 in the psi GC loop of transfer RNAs. This chain is tRNA pseudouridine synthase B, found in Vibrio parahaemolyticus serotype O3:K6 (strain RIMD 2210633).